The following is a 481-amino-acid chain: tRNA-2-methylthio-N(6)-dimethylallyladenosine synthase (481 aa).

The MTTase N-terminal domain maps to 24–140 (RKLFIESYGC…LPNLINEVEE (117 aa)). Residues Cys33, Cys69, Cys103, Cys178, Cys182, and Cys185 each contribute to the [4Fe-4S] cluster site. The Radical SAM core domain occupies 164–410 (QSNGVSAFVS…VDLQQKHSKQ (247 aa)). The 64-residue stretch at 413 to 476 (NSVIGTTVEV…SATLIGEPIG (64 aa)) folds into the TRAM domain.

It belongs to the methylthiotransferase family. MiaB subfamily. As to quaternary structure, monomer. It depends on [4Fe-4S] cluster as a cofactor.

The protein resides in the cytoplasm. It catalyses the reaction N(6)-dimethylallyladenosine(37) in tRNA + (sulfur carrier)-SH + AH2 + 2 S-adenosyl-L-methionine = 2-methylsulfanyl-N(6)-dimethylallyladenosine(37) in tRNA + (sulfur carrier)-H + 5'-deoxyadenosine + L-methionine + A + S-adenosyl-L-homocysteine + 2 H(+). In terms of biological role, catalyzes the methylthiolation of N6-(dimethylallyl)adenosine (i(6)A), leading to the formation of 2-methylthio-N6-(dimethylallyl)adenosine (ms(2)i(6)A) at position 37 in tRNAs that read codons beginning with uridine. The sequence is that of tRNA-2-methylthio-N(6)-dimethylallyladenosine synthase from Christiangramia forsetii (strain DSM 17595 / CGMCC 1.15422 / KT0803) (Gramella forsetii).